The chain runs to 170 residues: Non-classical export protein 102 (170 aa).

Residues 1–11 are Cytoplasmic-facing; that stretch reads MLAIGDVILRA. The 136-residue stretch at 6 to 141 folds into the MARVEL domain; the sequence is DVILRAFNFV…TFIFIASAIF (136 aa). A helical transmembrane segment spans residues 12–32; the sequence is FNFVFLVIALGLTGSLAATTI. The Extracellular segment spans residues 33–38; the sequence is TQHNPQ. The helical transmembrane segment at 39–61 threads the bilayer; that stretch reads INFAVFAAAFGLLTSSFYGVFAY. The Cytoplasmic portion of the chain corresponds to 62–76; it reads FVAAFAWPVILFVFD. The helical transmembrane segment at 77 to 97 threads the bilayer; that stretch reads FLNFVFTFAAATAIAAGIRAH. Residues 98–125 lie on the Extracellular side of the membrane; sequence SCSNQDYLDDNNIAQGSSGRCRKAQAST. A helical membrane pass occupies residues 126 to 146; that stretch reads AFLYFSTFIFIASAIFSAISL. The Cytoplasmic portion of the chain corresponds to 147–170; that stretch reads SKGGLFGHSSRPAPRTGVPTMSQV.

It belongs to the NCE102 family.

The protein localises to the cell membrane. Its function is as follows. Involved in membrane organization. Involved in a novel pathway of export of proteins that lack a cleavable signal sequence. Non-classical export pathway also functions as an alternative clearance/detoxification pathway to eliminate damaged material, when the basic repair pathway is not sufficient. Regulates actin organization and subsequent morphogenesis and pathogenesis. This Candida albicans (strain SC5314 / ATCC MYA-2876) (Yeast) protein is Non-classical export protein 102.